Here is a 218-residue protein sequence, read N- to C-terminus: Eukaryotic translation initiation factor 3 subunit K (218 aa).

The 162-residue stretch at 44-205 folds into the PCI domain; it reads YDWGANLAVL…NIKTKNITEK (162 aa).

This sequence belongs to the eIF-3 subunit K family. As to quaternary structure, component of the eukaryotic translation initiation factor 3 (eIF-3) complex.

The protein localises to the cytoplasm. Component of the eukaryotic translation initiation factor 3 (eIF-3) complex, which is involved in protein synthesis of a specialized repertoire of mRNAs and, together with other initiation factors, stimulates binding of mRNA and methionyl-tRNAi to the 40S ribosome. The eIF-3 complex specifically targets and initiates translation of a subset of mRNAs involved in cell proliferation. The polypeptide is Eukaryotic translation initiation factor 3 subunit K (Bombyx mori (Silk moth)).